Here is a 320-residue protein sequence, read N- to C-terminus: o-succinylbenzoate synthase (320 aa).

The active-site Proton donor is the Lys133. The Mg(2+) site is built by Asp161, Glu190, and Asp213. Residue Lys235 is the Proton acceptor of the active site.

Belongs to the mandelate racemase/muconate lactonizing enzyme family. MenC type 1 subfamily. A divalent metal cation serves as cofactor.

It catalyses the reaction (1R,6R)-6-hydroxy-2-succinyl-cyclohexa-2,4-diene-1-carboxylate = 2-succinylbenzoate + H2O. Its pathway is quinol/quinone metabolism; 1,4-dihydroxy-2-naphthoate biosynthesis; 1,4-dihydroxy-2-naphthoate from chorismate: step 4/7. It functions in the pathway quinol/quinone metabolism; menaquinone biosynthesis. Its function is as follows. Converts 2-succinyl-6-hydroxy-2,4-cyclohexadiene-1-carboxylate (SHCHC) to 2-succinylbenzoate (OSB). This chain is o-succinylbenzoate synthase, found in Escherichia coli (strain K12 / MC4100 / BW2952).